The primary structure comprises 853 residues: DNA mismatch repair protein MutS (853 aa).

ATP is bound at residue 614 to 621 (GPNMGGKS).

The protein belongs to the DNA mismatch repair MutS family.

Its function is as follows. This protein is involved in the repair of mismatches in DNA. It is possible that it carries out the mismatch recognition step. This protein has a weak ATPase activity. The chain is DNA mismatch repair protein MutS from Escherichia coli (strain SE11).